The sequence spans 209 residues: Ribonuclease HII (209 aa).

The region spanning 25–209 (RRIAGIDEAG…ATFRGVREYL (185 aa)) is the RNase H type-2 domain. A divalent metal cation contacts are provided by Asp31, Glu32, and Asp123.

This sequence belongs to the RNase HII family. Requires Mn(2+) as cofactor. Mg(2+) serves as cofactor.

It localises to the cytoplasm. The catalysed reaction is Endonucleolytic cleavage to 5'-phosphomonoester.. Its function is as follows. Endonuclease that specifically degrades the RNA of RNA-DNA hybrids. The polypeptide is Ribonuclease HII (Syntrophotalea carbinolica (strain DSM 2380 / NBRC 103641 / GraBd1) (Pelobacter carbinolicus)).